The chain runs to 501 residues: Fumarate reductase 2 (501 aa).

Residues 1–32 (MIRSVRRVFIYVSIFVLIIVLKRTLSGTDQTS) constitute a mitochondrion transit peptide. Residue 37–51 (VVVIGSGLAGLTTSN) participates in FAD binding. Residues His281 and Arg304 contribute to the active site.

This sequence belongs to the FAD-dependent oxidoreductase 2 family. FRD/SDH subfamily. Requires FAD as cofactor.

Its subcellular location is the mitochondrion. The catalysed reaction is succinate + NAD(+) = fumarate + NADH + H(+). In terms of biological role, irreversibly catalyzes the reduction of fumarate to succinate. Together with the second isozyme of soluble fumarate reductase (FRD1), essential for anaerobic growth. Involved in maintaining redox balance during oxygen deficiency conditions. Reduction of fumarate is the main source of succinate during fermentation, and under anaerobic conditions, the formation of succinate is strictly required for the reoxidation of FADH(2). The chain is Fumarate reductase 2 (OSM1) from Saccharomyces cerevisiae (strain ATCC 204508 / S288c) (Baker's yeast).